A 418-amino-acid polypeptide reads, in one-letter code: Glutamyl-tRNA reductase (418 aa).

Substrate is bound by residues 49–52 (TCNR), serine 107, 112–114 (EPQ), and glutamine 118. Residue cysteine 50 is the Nucleophile of the active site. 187 to 192 (GAGETI) serves as a coordination point for NADP(+).

It belongs to the glutamyl-tRNA reductase family. Homodimer.

The enzyme catalyses (S)-4-amino-5-oxopentanoate + tRNA(Glu) + NADP(+) = L-glutamyl-tRNA(Glu) + NADPH + H(+). It participates in porphyrin-containing compound metabolism; protoporphyrin-IX biosynthesis; 5-aminolevulinate from L-glutamyl-tRNA(Glu): step 1/2. Its function is as follows. Catalyzes the NADPH-dependent reduction of glutamyl-tRNA(Glu) to glutamate 1-semialdehyde (GSA). This Pseudoalteromonas translucida (strain TAC 125) protein is Glutamyl-tRNA reductase.